A 964-amino-acid polypeptide reads, in one-letter code: Siderophore exporter MmpL5 (964 aa).

A run of 12 helical transmembrane segments spans residues 31-51 (FAVP…VTVP), 203-223 (SLQV…LLVY), 230-250 (AIML…VAFL), 255-275 (IIGL…AAAT), 302-322 (MFGG…GATF), 340-360 (AIGM…IIAV), 389-409 (WPGP…LTLP), 773-793 (TYDL…IMLI), 803-823 (VIVG…VLIW), 826-846 (ILGI…LLAV), 880-900 (VVTA…VSEL), and 923-943 (SFMT…PQVV).

The protein belongs to the resistance-nodulation-cell division (RND) (TC 2.A.6) family. MmpL subfamily. Interacts with MmpS5.

The protein resides in the cell inner membrane. Its function is as follows. Part of an export system, which is required for biosynthesis and secretion of siderophores. The protein is Siderophore exporter MmpL5 (mmpL5) of Mycobacterium tuberculosis (strain CDC 1551 / Oshkosh).